Reading from the N-terminus, the 450-residue chain is Oxygen-independent coproporphyrinogen III oxidase (450 aa).

The Radical SAM core domain maps to 42–276 (LPAGASASLY…CAIANALKEA (235 aa)). An S-adenosyl-L-methionine-binding site is contributed by Tyr-51. [4Fe-4S] cluster contacts are provided by Cys-57 and Cys-61. An S-adenosyl-L-methionine-binding site is contributed by Tyr-63. Cys-64 lines the [4Fe-4S] cluster pocket. S-adenosyl-L-methionine contacts are provided by residues Gly-108, 109-110 (GT), Glu-141, Gln-168, Arg-180, Asp-205, Ala-239, and Ile-325.

This sequence belongs to the anaerobic coproporphyrinogen-III oxidase family. In terms of assembly, monomer. [4Fe-4S] cluster serves as cofactor.

Its subcellular location is the cytoplasm. It carries out the reaction coproporphyrinogen III + 2 S-adenosyl-L-methionine = protoporphyrinogen IX + 2 5'-deoxyadenosine + 2 L-methionine + 2 CO2. Its pathway is porphyrin-containing compound metabolism; protoporphyrin-IX biosynthesis; protoporphyrinogen-IX from coproporphyrinogen-III (AdoMet route): step 1/1. Functionally, involved in the heme biosynthesis. Catalyzes the anaerobic oxidative decarboxylation of propionate groups of rings A and B of coproporphyrinogen III to yield the vinyl groups in protoporphyrinogen IX. This Bradyrhizobium diazoefficiens (strain JCM 10833 / BCRC 13528 / IAM 13628 / NBRC 14792 / USDA 110) protein is Oxygen-independent coproporphyrinogen III oxidase (hemN).